We begin with the raw amino-acid sequence, 264 residues long: Putative HTH-type transcriptional regulator TrmBL2 (264 aa).

Positions 33–54 (LTPAELASVSEVPAPRTYDVLR) form a DNA-binding region, H-T-H motif.

It belongs to the transcriptional regulator TrmB family.

Binds to the maltodextrin transport gene cluster (mdxE operon) promoter and to some other TGM (Thermococcales-Glycolytic-Motif) sequences, but not exclusively. This chain is Putative HTH-type transcriptional regulator TrmBL2 (trmBL2), found in Pyrococcus furiosus (strain ATCC 43587 / DSM 3638 / JCM 8422 / Vc1).